The chain runs to 356 residues: 3-dehydroquinate synthase (356 aa).

NAD(+) is bound by residues 69 to 74 (DGEQYK), 103 to 107 (GVVGD), 127 to 128 (TT), Lys-140, and Lys-149. Glu-182, His-245, and His-262 together coordinate Zn(2+).

Belongs to the sugar phosphate cyclases superfamily. Dehydroquinate synthase family. Co(2+) is required as a cofactor. The cofactor is Zn(2+). Requires NAD(+) as cofactor.

The protein resides in the cytoplasm. The catalysed reaction is 7-phospho-2-dehydro-3-deoxy-D-arabino-heptonate = 3-dehydroquinate + phosphate. The protein operates within metabolic intermediate biosynthesis; chorismate biosynthesis; chorismate from D-erythrose 4-phosphate and phosphoenolpyruvate: step 2/7. Catalyzes the conversion of 3-deoxy-D-arabino-heptulosonate 7-phosphate (DAHP) to dehydroquinate (DHQ). This is 3-dehydroquinate synthase from Pseudoalteromonas translucida (strain TAC 125).